We begin with the raw amino-acid sequence, 137 residues long: Small ribosomal subunit protein uS9 (137 aa).

The disordered stretch occupies residues 104-137 (PLKSEGYLTRDPRAKERKKYGLHKARKAPQYSKR). Residues 118 to 137 (KERKKYGLHKARKAPQYSKR) show a composition bias toward basic residues.

It belongs to the universal ribosomal protein uS9 family.

This chain is Small ribosomal subunit protein uS9, found in Gloeothece citriformis (strain PCC 7424) (Cyanothece sp. (strain PCC 7424)).